We begin with the raw amino-acid sequence, 568 residues long: Vacuolar protein 8 (568 aa).

Gly2 is lipidated: N-myristoyl glycine. S-palmitoyl cysteine attachment occurs at residues Cys4, Cys5, and Cys7. ARM repeat units follow at residues 37–74 (DKDN…FAEI), 75–114 (TEKY…NLAV), 116–155 (NENK…NLAT), 157–196 (DDNK…NMTH), 198–237 (GENR…NIAV), 241–280 (NRRK…NLAS), 282–321 (TGYQ…NISI), 323–363 (PLNE…NLAA), and 407–446 (DNSK…NLCS).

It belongs to the beta-catenin family.

Its subcellular location is the vacuole membrane. Its function is as follows. Functions in both vacuole inheritance and protein targeting from the cytoplasm to vacuole. The polypeptide is Vacuolar protein 8 (VAC8) (Eremothecium gossypii (strain ATCC 10895 / CBS 109.51 / FGSC 9923 / NRRL Y-1056) (Yeast)).